An 807-amino-acid polypeptide reads, in one-letter code: Mechanosensitive cation channel TMEM63A (807 aa).

Residues 1 to 51 are Extracellular-facing; the sequence is MMDSPFLELWQSKAVSIREQLGLGDRPNDSYCYNSAKNSTVLQGVTFGGIP. An N-linked (GlcNAc...) asparagine glycan is attached at Asn-38. A helical transmembrane segment spans residues 52–74; that stretch reads TVLLIDVSCFLFLILVFSIIRRR. Over 75–134 the chain is Cytoplasmic; sequence FWDYGRIALVSEADSESRFQRLSSTSSSGQQDFENELGCCPWLTAIFRLHDDQILEWCGE. Residues 135-167 form a helical membrane-spanning segment; the sequence is DAIHYLSFQRHIIFLLVVVSFLSLCVILPVNLS. Over 168-191 the chain is Extracellular; it reads GDLLDKDPYSFGRTTIANLQTDND. Residues 192–217 traverse the membrane as a helical segment; it reads LLWLHTIFAVIYLFLTVGFMRHHTQS. Topologically, residues 218–416 are cytoplasmic; the sequence is IKYKEENLVR…CWKNLSIQGL (199 aa). Residues 219–414 form an intracellular linker IL2; confers mechanosensitivity region; the sequence is KYKEENLVRR…DICWKNLSIQ (196 aa). Residues 417–444 traverse the membrane as a helical segment; the sequence is RWWLQWLGINFTLFLGLFFLTTPSIILS. Residues 445 to 462 are Extracellular-facing; sequence TMDKFNVTKPIHALNNPI. N-linked (GlcNAc...) asparagine glycosylation is present at Asn-450. A helical transmembrane segment spans residues 463 to 490; sequence ISQFFPTLLLWSFSALLPSIVYYSTLLE. Residues 491–495 lie on the Cytoplasmic side of the membrane; the sequence is SHWTK. Residues 496 to 532 form a helical membrane-spanning segment; the sequence is SGENQIMMTKVYIFLIFMVLILPSLGLTSLDFFFRWL. Over 533–554 the chain is Extracellular; the sequence is FDKTSSEASIRLECVFLPDQGA. Residues 555–586 form a helical membrane-spanning segment; it reads FFVNYVIASAFIGNGMELLRLPGLILYTFRMI. A gating helix region spans residues 555–586; sequence FFVNYVIASAFIGNGMELLRLPGLILYTFRMI. Over 587 to 606 the chain is Cytoplasmic; that stretch reads MAKTAADRRNVKQNQAFQYE. A helical membrane pass occupies residues 607 to 624; the sequence is FGAMYAWMLCVFTVIVAY. The Extracellular segment spans residues 625 to 628; sequence SITC. Residues 629–651 traverse the membrane as a helical segment; sequence PIIAPFGLIYILLKHMVDRHNLY. The Cytoplasmic portion of the chain corresponds to 652-661; that stretch reads FVYLPAKLEK. Residues 662-689 traverse the membrane as a helical segment; that stretch reads GIHFAAVNQALAAPILCLFWLYFFSFLR. Topologically, residues 690-694 are extracellular; the sequence is LGMKA. Residues 695 to 709 form a helical membrane-spanning segment; that stretch reads PATLFTFLVLLLTIL. Residues 710–807 lie on the Cytoplasmic side of the membrane; sequence VCLAHTCFGC…GSVAAAPQEA (98 aa). Position 739 is a phosphoserine (Ser-739).

This sequence belongs to the CSC1 (TC 1.A.17) family. Monomer. N-Glycosylated.

The protein localises to the lysosome membrane. The protein resides in the early endosome membrane. It is found in the cell membrane. It carries out the reaction Ca(2+)(in) = Ca(2+)(out). Its function is as follows. Mechanosensitive cation channel with low conductance and high activation threshold. In contrast to TMEM63B, does not show phospholipid scramblase activity. Acts as a regulator of lysosomal morphology by mediating lysosomal mechanosensitivity. Important for the baby's first breath and respiration throughout life. Upon lung inflation conducts cation currents in alveolar type 1 and 2 cells triggering lamellar body exocytosis and surfactant secretion into airspace. Also acts as an osmosensitive cation channel preferentially activated by hypotonic stress. This Homo sapiens (Human) protein is Mechanosensitive cation channel TMEM63A.